A 552-amino-acid chain; its full sequence is Nucleolar complex protein 4 (552 aa).

It belongs to the CBF/MAK21 family. Interacts with NOP14 and MPP10. Interacts with snoRNA U3. Component of the ribosomal small subunit (SSU) processome composed of at least 40 protein subunits and snoRNA U3.

It is found in the nucleus. It localises to the nucleolus. Its function is as follows. Involved in nucleolar processing of pre-18S ribosomal RNA and ribosome assembly. Has a role in the nuclear export of 40S pre-ribosomal subunit to the cytoplasm. Its subcellular location and association with pre-40S subunit are unaffected by RPS19 disruptions, suggesting it acts before the ribosomal protein. This chain is Nucleolar complex protein 4 (NOC4), found in Saccharomyces cerevisiae (strain ATCC 204508 / S288c) (Baker's yeast).